The sequence spans 486 residues: Maintenance of mitochondrial morphology protein 1 (486 aa).

Over 1 to 23 (MSQHSQYDAPGVPVQPSLSFTQG) the chain is Lumenal. Residues 24–44 (FLLGQLSVVLLIGAFIKFFIF) traverse the membrane as a helical segment. Topologically, residues 45 to 486 (GEAPAPPSRG…PGSMPGGRAQ (442 aa)) are cytoplasmic. Positions 52 to 103 (SRGLASRTASHHRSYSINQGDNNVSNNNTSGGSPRTLCEKPSTSNVLRPVPS) are disordered. Positions 67 to 84 (SINQGDNNVSNNNTSGGS) are enriched in low complexity. Polar residues predominate over residues 92–103 (PSTSNVLRPVPS). The 250-residue stretch at 140 to 389 (QPESLDWFNV…EPRVQVVGLP (250 aa)) folds into the SMP-LTD domain. A compositionally biased stretch (low complexity) spans 413-426 (AAASASSRGGAPEA). The interval 413–486 (AAASASSRGG…PGSMPGGRAQ (74 aa)) is disordered.

This sequence belongs to the MMM1 family. Homodimer. Component of the ER-mitochondria encounter structure (ERMES) or MDM complex, composed of mmm1, mdm10, mdm12 and mdm34. A mmm1 homodimer associates with one molecule of mdm12 on each side in a pairwise head-to-tail manner, and the SMP-LTD domains of mmm1 and mdm12 generate a continuous hydrophobic tunnel for phospholipid trafficking.

The protein resides in the endoplasmic reticulum membrane. In terms of biological role, component of the ERMES/MDM complex, which serves as a molecular tether to connect the endoplasmic reticulum (ER) and mitochondria. Components of this complex are involved in the control of mitochondrial shape and protein biogenesis, and function in nonvesicular lipid trafficking between the ER and mitochondria. The mdm12-mmm1 subcomplex functions in the major beta-barrel assembly pathway that is responsible for biogenesis of all outer membrane beta-barrel proteins, and acts in a late step after the SAM complex. The mdm10-mdm12-mmm1 subcomplex further acts in the TOM40-specific pathway after the action of the mdm12-mmm1 complex. Essential for establishing and maintaining the structure of mitochondria and maintenance of mtDNA nucleoids. In Talaromyces marneffei (strain ATCC 18224 / CBS 334.59 / QM 7333) (Penicillium marneffei), this protein is Maintenance of mitochondrial morphology protein 1.